The sequence spans 81 residues: Large ribosomal subunit protein uL23 (81 aa).

This sequence belongs to the universal ribosomal protein uL23 family. In terms of assembly, part of the 50S ribosomal subunit. Contacts protein L29.

In terms of biological role, binds to 23S rRNA. One of the proteins that surrounds the polypeptide exit tunnel on the outside of the ribosome. In Pyrobaculum aerophilum (strain ATCC 51768 / DSM 7523 / JCM 9630 / CIP 104966 / NBRC 100827 / IM2), this protein is Large ribosomal subunit protein uL23.